A 252-amino-acid polypeptide reads, in one-letter code: Phosphate import ATP-binding protein PstB 1 (252 aa).

The ABC transporter domain maps to 6–247 (ISSKDLHLYY…PKEKQTEDYI (242 aa)). ATP is bound at residue 38 to 45 (GPSGCGKS).

This sequence belongs to the ABC transporter superfamily. Phosphate importer (TC 3.A.1.7) family. The complex is composed of two ATP-binding proteins (PstB), two transmembrane proteins (PstC and PstA) and a solute-binding protein (PstS).

It is found in the cell membrane. It carries out the reaction phosphate(out) + ATP + H2O = ADP + 2 phosphate(in) + H(+). Functionally, part of the ABC transporter complex PstSACB involved in phosphate import. Responsible for energy coupling to the transport system. The chain is Phosphate import ATP-binding protein PstB 1 from Enterococcus faecalis (strain ATCC 700802 / V583).